Here is a 215-residue protein sequence, read N- to C-terminus: Vesicle-trafficking protein SEC22b-B (215 aa).

At 1–190 the chain is on the cytoplasmic side; the sequence is MVLLTMIARL…RSDAKYLNTR (190 aa). One can recognise a Longin domain in the interval 6-119; that stretch reads MIARLADGLP…YSFIEFDTYI (114 aa). A v-SNARE coiled-coil homology domain is found at 134–194; sequence NLSNINTELQ…KYLNTRSTYA (61 aa). Residues 191-213 form a helical membrane-spanning segment; it reads STYAKLAAGGVFFIMLIVYIRFW. At 214 to 215 the chain is on the lumenal side; the sequence is WL.

Belongs to the synaptobrevin family. In terms of assembly, component of 2 distinct SNARE complexes.

It is found in the endoplasmic reticulum membrane. Its subcellular location is the endoplasmic reticulum-Golgi intermediate compartment membrane. The protein resides in the golgi apparatus. The protein localises to the cis-Golgi network membrane. It localises to the trans-Golgi network membrane. It is found in the melanosome. SNARE involved in targeting and fusion of ER-derived transport vesicles with the Golgi complex as well as Golgi-derived retrograde transport vesicles with the ER. The protein is Vesicle-trafficking protein SEC22b-B of Danio rerio (Zebrafish).